We begin with the raw amino-acid sequence, 382 residues long: L-arabinitol 4-dehydrogenase (382 aa).

Positions 55, 80, 81, 110, 113, 116, 124, and 165 each coordinate Zn(2+). Residues 192–193, D213, R218, I293, and 317–319 each bind NAD(+); these read PI and QYR.

The protein belongs to the zinc-containing alcohol dehydrogenase family. Homotetramer. Zn(2+) is required as a cofactor.

The enzyme catalyses L-arabinitol + NAD(+) = L-xylulose + NADH + H(+). The protein operates within carbohydrate degradation; L-arabinose degradation via L-arabinitol; D-xylulose 5-phosphate from L-arabinose (fungal route): step 2/5. In terms of biological role, catalyzes the NAD-dependent oxidation of L-arabinitol to L-xylulose in the fungal L-arabinose catabolic pathway. L-arabinose catabolism is important for using plant material as a carbon source. Also active on ribitol and xylitol. Not active with NADP as cosubstrate. The protein is L-arabinitol 4-dehydrogenase (ladA) of Aspergillus oryzae (Yellow koji mold).